Here is a 570-residue protein sequence, read N- to C-terminus: Methionine--tRNA ligase (570 aa).

A 'HIGH' region motif is present at residues Pro-11 to Asn-21. The Zn(2+) site is built by Cys-143, Cys-146, Cys-156, and Cys-159. The 'KMSKS' region signature appears at Lys-333–Ser-337. Residue Lys-336 participates in ATP binding.

Belongs to the class-I aminoacyl-tRNA synthetase family. MetG type 1 subfamily. Requires Zn(2+) as cofactor.

It localises to the cytoplasm. It carries out the reaction tRNA(Met) + L-methionine + ATP = L-methionyl-tRNA(Met) + AMP + diphosphate. Functionally, is required not only for elongation of protein synthesis but also for the initiation of all mRNA translation through initiator tRNA(fMet) aminoacylation. The polypeptide is Methionine--tRNA ligase (Pyrobaculum arsenaticum (strain DSM 13514 / JCM 11321 / PZ6)).